The primary structure comprises 298 residues: tRNA dimethylallyltransferase (298 aa).

Residue 10–17 (GPTASGKT) participates in ATP binding. Residue 12-17 (TASGKT) participates in substrate binding. An interaction with substrate tRNA region spans residues 35–38 (DSMC).

This sequence belongs to the IPP transferase family. In terms of assembly, monomer. Mg(2+) serves as cofactor.

It catalyses the reaction adenosine(37) in tRNA + dimethylallyl diphosphate = N(6)-dimethylallyladenosine(37) in tRNA + diphosphate. In terms of biological role, catalyzes the transfer of a dimethylallyl group onto the adenine at position 37 in tRNAs that read codons beginning with uridine, leading to the formation of N6-(dimethylallyl)adenosine (i(6)A). This Hydrogenobaculum sp. (strain Y04AAS1) protein is tRNA dimethylallyltransferase.